The following is a 1088-amino-acid chain: Protein argonaute 18 (1088 aa).

Residues 1–220 (MASRGGGQHQ…QPPPDLPQAP (220 aa)) form a disordered region. Composition is skewed to gly residues over residues 20–30 (GGYGRGGGGGR), 51–86 (YPGGRGGGYGGGGGGGGPPYYGGGGGGGGGGGGQGR), 95–127 (GRGYQRGMEGGGGRGGYRGDGDGGYGRGGGGYH), 135–148 (GRGGGGGGGGGGGY), 161–182 (ARGGGGGGGGYHGDGEAGYGRG), and 191–206 (GRGGGGRRGGRGGGGS). Pro residues predominate over residues 211–220 (QPPPDLPQAP). One can recognise a PAZ domain in the interval 477–574 (TVGYFLNNYG…LPMELCNIVP (98 aa)). In terms of domain architecture, Piwi spans 747–1056 (LLLVVMTDDK…LAFRARFYLT (310 aa)).

Belongs to the argonaute family. Ago subfamily.

In terms of biological role, probably involved in the RNA silencing pathway. May bind to short RNAs such as microRNAs (miRNAs) or short interfering RNAs (siRNAs), and represses the translation of mRNAs which are complementary to them. This Oryza sativa subsp. japonica (Rice) protein is Protein argonaute 18 (AGO18).